The chain runs to 515 residues: Aldehyde dehydrogenase (515 aa).

Polar residues predominate over residues 1-12; sequence MTVAEQQPQHQG. Residues 1–20 are disordered; sequence MTVAEQQPQHQGYANPGTPG. 228–234 lines the NAD(+) pocket; sequence GFGLEAG. Catalysis depends on residues E272 and C311.

This sequence belongs to the aldehyde dehydrogenase family.

The enzyme catalyses an aldehyde + NAD(+) + H2O = a carboxylate + NADH + 2 H(+). The protein is Aldehyde dehydrogenase (aldA) of Deinococcus radiodurans (strain ATCC 13939 / DSM 20539 / JCM 16871 / CCUG 27074 / LMG 4051 / NBRC 15346 / NCIMB 9279 / VKM B-1422 / R1).